The chain runs to 940 residues: Protein translocase subunit SecA (940 aa).

ATP is bound by residues Gln86, 104-108 (GEGKT), and Asp494. The disordered stretch occupies residues 884 to 940 (ATAKAQKDQQAEDAVLVGEDEPETPQGPPARGAFGQPTGASSAPQNREERRKADRRK). A compositionally biased stretch (basic and acidic residues) spans 929-940 (NREERRKADRRK).

This sequence belongs to the SecA family. As to quaternary structure, monomer and homodimer. Part of the essential Sec protein translocation apparatus which comprises SecA, SecYEG and auxiliary proteins SecDF. Other proteins may also be involved.

It localises to the cell membrane. The protein localises to the cytoplasm. It catalyses the reaction ATP + H2O + cellular proteinSide 1 = ADP + phosphate + cellular proteinSide 2.. Part of the Sec protein translocase complex. Interacts with the SecYEG preprotein conducting channel. Has a central role in coupling the hydrolysis of ATP to the transfer of proteins into and across the cell membrane, serving as an ATP-driven molecular motor driving the stepwise translocation of polypeptide chains across the membrane. The chain is Protein translocase subunit SecA from Clavibacter sepedonicus (Clavibacter michiganensis subsp. sepedonicus).